A 358-amino-acid polypeptide reads, in one-letter code: Ganglioside-induced differentiation-associated protein 1 (358 aa).

The GST N-terminal domain maps to 24–105 (VKLILYHWTH…YLEQTFLDER (82 aa)). Residues lysine 50, lysine 172, lysine 173, lysine 188, and lysine 190 each participate in a glycyl lysine isopeptide (Lys-Gly) (interchain with G-Cter in ubiquitin) cross-link. Residues 153–309 (PAYATTRIRS…LISAVLPTAF (157 aa)) form the GST C-terminal domain. The residue at position 203 (lysine 203) is an N6-acetyllysine; alternate. A Glycyl lysine isopeptide (Lys-Gly) (interchain with G-Cter in ubiquitin); alternate cross-link involves residue lysine 203. Glycyl lysine isopeptide (Lys-Gly) (interchain with G-Cter in ubiquitin) cross-links involve residues lysine 206, lysine 207, and lysine 214. Helical transmembrane passes span 292–312 (VLGH…FRVA) and 320–340 (LGTT…FMLF). The required for mitochondrial localization stretch occupies residues 320 to 358 (LGTTLVVGLLAGVGYFAFMLFRKRLGSMILAFRPRPNYF).

It belongs to the GST superfamily. As to quaternary structure, homodimer. In terms of processing, ubiquitinated by PRKN during mitophagy, leading to its degradation and enhancement of mitophagy. Deubiquitinated by USP30. Highly expressed in whole brain and spinal cord. Predominant expression in central tissues of the nervous system not only in neurons but also in Schwann cells.

The protein localises to the mitochondrion outer membrane. It is found in the cytoplasm. Its function is as follows. Regulates the mitochondrial network by promoting mitochondrial fission. This chain is Ganglioside-induced differentiation-associated protein 1 (GDAP1), found in Homo sapiens (Human).